Consider the following 62-residue polypeptide: DNA gyrase inhibitor YacG (62 aa).

Zn(2+) contacts are provided by Cys-9, Cys-12, Cys-27, and Cys-31. Residues 43–53 are compositionally biased toward basic and acidic residues; sequence GYRIPGEKAPE. A disordered region spans residues 43-62; that stretch reads GYRIPGEKAPESGDEEPGDE.

The protein belongs to the DNA gyrase inhibitor YacG family. In terms of assembly, interacts with GyrB. Zn(2+) serves as cofactor.

Functionally, inhibits all the catalytic activities of DNA gyrase by preventing its interaction with DNA. Acts by binding directly to the C-terminal domain of GyrB, which probably disrupts DNA binding by the gyrase. The chain is DNA gyrase inhibitor YacG from Citrifermentans bemidjiense (strain ATCC BAA-1014 / DSM 16622 / JCM 12645 / Bem) (Geobacter bemidjiensis).